Here is a 450-residue protein sequence, read N- to C-terminus: tRNA-2-methylthio-N(6)-dimethylallyladenosine synthase (450 aa).

An MTTase N-terminal domain is found at 3 to 118 (KKVFIKTFGC…LPELLQQRER (116 aa)). [4Fe-4S] cluster-binding residues include Cys12, Cys49, Cys81, Cys155, Cys159, and Cys162. In terms of domain architecture, Radical SAM core spans 141–376 (SVQGASAFVS…VIDTHIRSIS (236 aa)). In terms of domain architecture, TRAM spans 377-440 (ASRVGTVQRI…AYTLRGQYCA (64 aa)).

This sequence belongs to the methylthiotransferase family. MiaB subfamily. Monomer. It depends on [4Fe-4S] cluster as a cofactor.

The protein resides in the cytoplasm. The catalysed reaction is N(6)-dimethylallyladenosine(37) in tRNA + (sulfur carrier)-SH + AH2 + 2 S-adenosyl-L-methionine = 2-methylsulfanyl-N(6)-dimethylallyladenosine(37) in tRNA + (sulfur carrier)-H + 5'-deoxyadenosine + L-methionine + A + S-adenosyl-L-homocysteine + 2 H(+). Functionally, catalyzes the methylthiolation of N6-(dimethylallyl)adenosine (i(6)A), leading to the formation of 2-methylthio-N6-(dimethylallyl)adenosine (ms(2)i(6)A) at position 37 in tRNAs that read codons beginning with uridine. The polypeptide is tRNA-2-methylthio-N(6)-dimethylallyladenosine synthase (Verminephrobacter eiseniae (strain EF01-2)).